The chain runs to 412 residues: Glutamyl-tRNA reductase (412 aa).

Substrate-binding positions include 52-55, Ser-108, 113-115, and Gln-119; these read TCNR and EYE. The active-site Nucleophile is Cys-53. Position 189–194 (189–194) interacts with NADP(+); it reads GAGEIG.

This sequence belongs to the glutamyl-tRNA reductase family. As to quaternary structure, homodimer.

The enzyme catalyses (S)-4-amino-5-oxopentanoate + tRNA(Glu) + NADP(+) = L-glutamyl-tRNA(Glu) + NADPH + H(+). The protein operates within porphyrin-containing compound metabolism; protoporphyrin-IX biosynthesis; 5-aminolevulinate from L-glutamyl-tRNA(Glu): step 1/2. Its function is as follows. Catalyzes the NADPH-dependent reduction of glutamyl-tRNA(Glu) to glutamate 1-semialdehyde (GSA). This chain is Glutamyl-tRNA reductase, found in Sulfurisphaera tokodaii (strain DSM 16993 / JCM 10545 / NBRC 100140 / 7) (Sulfolobus tokodaii).